Consider the following 325-residue polypeptide: Aldose 1-epimerase (325 aa).

73–74 (NR) is a substrate binding site. His-177 acts as the Proton donor in catalysis. Asp-230 contributes to the substrate binding site. Glu-283 functions as the Proton acceptor in the catalytic mechanism.

The protein belongs to the aldose epimerase family.

The enzyme catalyses alpha-D-glucose = beta-D-glucose. Its pathway is carbohydrate metabolism; hexose metabolism. This chain is Aldose 1-epimerase (galM), found in Bacillus subtilis (strain 168).